Reading from the N-terminus, the 370-residue chain is Forkhead box protein J1.2 (370 aa).

A disordered region spans residues 45-74; it reads ANSRPPVPRVSQGPCSPPAGDTASCQAPRT. A DNA-binding region (fork-head) is located at residues 108 to 202; it reads KPPYSYATLI…VNGVLKRRRM (95 aa). A disordered region spans residues 227 to 246; it reads PGSHHMQHISGGHRQSRRYE.

Belongs to the FOXJ1 family.

The protein resides in the nucleus. Key transcription factor required for motile ciliogenesis. Activates genes essential for motile cilia formation and function. This Xenopus laevis (African clawed frog) protein is Forkhead box protein J1.2.